Reading from the N-terminus, the 259-residue chain is Protein YIF1B (259 aa).

M1 is subject to N-acetylmethionine. A disordered region spans residues 1 to 61 (MHATGLAAPA…QPSPGSLGYP (61 aa)). The Cytoplasmic segment spans residues 9–153 (PAGTPRLRKW…APRFDINAPD (145 aa)). T12 is modified (phosphothreonine). The span at 14 to 24 (RLRKWPSKRRV) shows a compositional bias: basic residues. S64 is subject to Phosphoserine. Residues 154–174 (LYIPAMAFITYILVAGLALGT) traverse the membrane as a helical segment. Residues 175–186 (QDRMIGGVLTGL) lie on the Extracellular side of the membrane. The chain crosses the membrane as a helical span at residues 187–207 (LFGKIGYYLVLAWCCVSIFVF). Residues 208–237 (MIRTLRLKILAQAAAEGVPVRGARNQLRMY) are Cytoplasmic-facing. The chain crosses the membrane as a helical span at residues 238-258 (LTMAVAAAQPVLMYWLTFHLV). A topological domain (extracellular) is located at residue R259.

The protein belongs to the YIF1 family. As to quaternary structure, interacts with HTR1A (via C-terminus). Interacts with ABCB9 (via TMD0); this interaction allows (but is not essential) the ER-to-Golgi trafficking and strongly depends on a salt bridge within TMD0. Highly expressed in brain. Expressed in heart, kidney, and lung and lower levels in spleen, muscle, and intestine (at protein level). Expressed in serotoninergic neurons (at protein level).

It is found in the endoplasmic reticulum membrane. Its subcellular location is the golgi apparatus membrane. The protein resides in the endoplasmic reticulum-Golgi intermediate compartment membrane. In terms of biological role, functions in endoplasmic reticulum to Golgi vesicle-mediated transport and regulates the proper organization of the endoplasmic reticulum and the Golgi. Plays a key role in targeting to neuronal dendrites receptors such as HTR1A. Plays also a role in primary cilium and sperm flagellum assembly probably through protein transport to these compartments. This chain is Protein YIF1B, found in Rattus norvegicus (Rat).